Here is a 275-residue protein sequence, read N- to C-terminus: Myoblast determination protein 1 homolog 2 (275 aa).

A bHLH domain is found at aspartate 84–leucine 135. The span at serine 232 to glutamine 265 shows a compositional bias: polar residues. The tract at residues serine 232–leucine 275 is disordered.

In terms of assembly, efficient DNA binding requires dimerization with another bHLH protein.

It localises to the nucleus. May act as a transcriptional activator that promotes transcription of muscle-specific target genes and plays a role in muscle differentiation. The sequence is that of Myoblast determination protein 1 homolog 2 (myod2) from Oncorhynchus mykiss (Rainbow trout).